Here is a 120-residue protein sequence, read N- to C-terminus: Ribosome-binding factor A (120 aa).

It belongs to the RbfA family. As to quaternary structure, monomer. Binds 30S ribosomal subunits, but not 50S ribosomal subunits or 70S ribosomes.

It localises to the cytoplasm. One of several proteins that assist in the late maturation steps of the functional core of the 30S ribosomal subunit. Associates with free 30S ribosomal subunits (but not with 30S subunits that are part of 70S ribosomes or polysomes). Required for efficient processing of 16S rRNA. May interact with the 5'-terminal helix region of 16S rRNA. This Verminephrobacter eiseniae (strain EF01-2) protein is Ribosome-binding factor A.